A 273-amino-acid polypeptide reads, in one-letter code: 3-methyl-2-oxobutanoate hydroxymethyltransferase (273 aa).

The Mg(2+) site is built by aspartate 49 and aspartate 88. 3-methyl-2-oxobutanoate is bound by residues 49-50, aspartate 88, and lysine 118; that span reads DS. Glutamate 120 provides a ligand contact to Mg(2+). Catalysis depends on glutamate 187, which acts as the Proton acceptor.

It belongs to the PanB family. As to quaternary structure, homodecamer; pentamer of dimers. The cofactor is Mg(2+).

It localises to the cytoplasm. The enzyme catalyses 3-methyl-2-oxobutanoate + (6R)-5,10-methylene-5,6,7,8-tetrahydrofolate + H2O = 2-dehydropantoate + (6S)-5,6,7,8-tetrahydrofolate. It functions in the pathway cofactor biosynthesis; (R)-pantothenate biosynthesis; (R)-pantoate from 3-methyl-2-oxobutanoate: step 1/2. In terms of biological role, catalyzes the reversible reaction in which hydroxymethyl group from 5,10-methylenetetrahydrofolate is transferred onto alpha-ketoisovalerate to form ketopantoate. The chain is 3-methyl-2-oxobutanoate hydroxymethyltransferase from Sinorhizobium medicae (strain WSM419) (Ensifer medicae).